The sequence spans 899 residues: Translation initiation factor IF-2 (899 aa).

Disordered regions lie at residues 116 to 135, 170 to 189, and 262 to 306; these read AKARAEQQAREAAEQKARLQ, RGGGTVKPAPKPAETLEQKK, and DREI…ANKH. Positions 399 to 568 constitute a tr-type G domain; it reads TRPPVVTIMG…LIQSELMELK (170 aa). A G1 region spans residues 408-415; that stretch reads GHVDHGKT. 408–415 contributes to the GTP binding site; the sequence is GHVDHGKT. Positions 433-437 are G2; the sequence is GITQH. The segment at 454 to 457 is G3; that stretch reads DTPG. GTP contacts are provided by residues 454–458 and 508–511; these read DTPGH and NKMD. Residues 508–511 form a G4 region; that stretch reads NKMD. Positions 544 to 546 are G5; that stretch reads SAH.

It belongs to the TRAFAC class translation factor GTPase superfamily. Classic translation factor GTPase family. IF-2 subfamily.

The protein localises to the cytoplasm. In terms of biological role, one of the essential components for the initiation of protein synthesis. Protects formylmethionyl-tRNA from spontaneous hydrolysis and promotes its binding to the 30S ribosomal subunits. Also involved in the hydrolysis of GTP during the formation of the 70S ribosomal complex. This Acinetobacter baumannii (strain AB307-0294) protein is Translation initiation factor IF-2.